A 161-amino-acid chain; its full sequence is MPDELRAEKSFPSKPYDSLKNKSEFDRVYQKGFKKHNPFFSLFVLDLSKEPPKEKEGFKDPLSCRLKDKKTLYLLGLSVSKKVGNAVKRNLIKRRLRSLTLKHAALCQGLALVFVPRSDCYHLDFWALEKHFLEMLTSIKNYMNKALKGLKKGITHTYAKQ.

The protein belongs to the RnpA family. Consists of a catalytic RNA component (M1 or rnpB) and a protein subunit.

It carries out the reaction Endonucleolytic cleavage of RNA, removing 5'-extranucleotides from tRNA precursor.. RNaseP catalyzes the removal of the 5'-leader sequence from pre-tRNA to produce the mature 5'-terminus. It can also cleave other RNA substrates such as 4.5S RNA. The protein component plays an auxiliary but essential role in vivo by binding to the 5'-leader sequence and broadening the substrate specificity of the ribozyme. The chain is Ribonuclease P protein component from Helicobacter pylori (strain Shi470).